A 131-amino-acid polypeptide reads, in one-letter code: D-ribose pyranase (131 aa).

Catalysis depends on H20, which acts as the Proton donor. Residues D28, H98, and 120-122 (YAN) each bind substrate.

Belongs to the RbsD / FucU family. RbsD subfamily. Homodecamer.

It is found in the cytoplasm. It carries out the reaction beta-D-ribopyranose = beta-D-ribofuranose. It participates in carbohydrate metabolism; D-ribose degradation; D-ribose 5-phosphate from beta-D-ribopyranose: step 1/2. In terms of biological role, catalyzes the interconversion of beta-pyran and beta-furan forms of D-ribose. The sequence is that of D-ribose pyranase from Bacillus cereus (strain AH187).